The primary structure comprises 75 residues: MARGFGRKKFCRFTVEGVKEIDYKDLDTLKSYITETGKIVPSRITGTSAKYQRQLSTAIKRARYLALLPYTDQHK.

It belongs to the bacterial ribosomal protein bS18 family. In terms of assembly, part of the 30S ribosomal subunit. Forms a tight heterodimer with protein bS6.

Its function is as follows. Binds as a heterodimer with protein bS6 to the central domain of the 16S rRNA, where it helps stabilize the platform of the 30S subunit. The polypeptide is Small ribosomal subunit protein bS18 (Hydrogenovibrio crunogenus (strain DSM 25203 / XCL-2) (Thiomicrospira crunogena)).